Consider the following 289-residue polypeptide: Acetylglutamate kinase (289 aa).

Residues 65-66, Arg-87, and Asn-187 each bind substrate; that span reads GG.

This sequence belongs to the acetylglutamate kinase family. ArgB subfamily.

Its subcellular location is the cytoplasm. It catalyses the reaction N-acetyl-L-glutamate + ATP = N-acetyl-L-glutamyl 5-phosphate + ADP. The protein operates within amino-acid biosynthesis; L-arginine biosynthesis; N(2)-acetyl-L-ornithine from L-glutamate: step 2/4. Catalyzes the ATP-dependent phosphorylation of N-acetyl-L-glutamate. This Chromobacterium violaceum (strain ATCC 12472 / DSM 30191 / JCM 1249 / CCUG 213 / NBRC 12614 / NCIMB 9131 / NCTC 9757 / MK) protein is Acetylglutamate kinase.